The following is a 151-amino-acid chain: Nucleoside diphosphate kinase (151 aa).

Positions 10, 58, 86, 92, 103, and 113 each coordinate ATP. H116 serves as the catalytic Pros-phosphohistidine intermediate.

This sequence belongs to the NDK family. As to quaternary structure, homotetramer. The cofactor is Mg(2+).

The protein resides in the cytoplasm. It carries out the reaction dZDP + ATP = dZTP + ADP. The enzyme catalyses a 2'-deoxyribonucleoside 5'-diphosphate + ATP = a 2'-deoxyribonucleoside 5'-triphosphate + ADP. It catalyses the reaction a ribonucleoside 5'-diphosphate + ATP = a ribonucleoside 5'-triphosphate + ADP. Its pathway is purine metabolism. In terms of biological role, major role in the synthesis of nucleoside triphosphates other than ATP. The ATP gamma phosphate is transferred to the NDP beta phosphate via a ping-pong mechanism, using a phosphorylated active-site intermediate. Functionally, (Microbial infection) Catalyzes the phosphorylation of dZDP to dZTP, when the bacterium is infected by a phage that produces the substrate for the synthesis of dZTP (2- amino-2'-deoxyadenosine 5'-triphosphate), which is then used by the phage as a DNA polymerase substrate. The polypeptide is Nucleoside diphosphate kinase (Synechococcus sp. (strain CC9605)).